Reading from the N-terminus, the 103-residue chain is Large ribosomal subunit protein bL21 (103 aa).

It belongs to the bacterial ribosomal protein bL21 family. In terms of assembly, part of the 50S ribosomal subunit. Contacts protein L20.

In terms of biological role, this protein binds to 23S rRNA in the presence of protein L20. This Hahella chejuensis (strain KCTC 2396) protein is Large ribosomal subunit protein bL21.